The chain runs to 355 residues: uncharacterized protein (355 aa).

Transmembrane regions (helical) follow at residues 275–295, 301–321, and 330–350; these read SLIV…FVAF, WNSI…VVGV, and IAST…PLAL.

The protein to M.tuberculosis Rv0497.

It localises to the cell membrane. This is an uncharacterized protein from Mycobacterium leprae (strain TN).